The sequence spans 291 residues: ATP synthase gamma chain (291 aa).

This sequence belongs to the ATPase gamma chain family. F-type ATPases have 2 components, CF(1) - the catalytic core - and CF(0) - the membrane proton channel. CF(1) has five subunits: alpha(3), beta(3), gamma(1), delta(1), epsilon(1). CF(0) has three main subunits: a, b and c.

The protein localises to the cell membrane. Functionally, produces ATP from ADP in the presence of a proton gradient across the membrane. The gamma chain is believed to be important in regulating ATPase activity and the flow of protons through the CF(0) complex. The sequence is that of ATP synthase gamma chain from Buchnera aphidicola subsp. Baizongia pistaciae (strain Bp).